Consider the following 447-residue polypeptide: Probable ethanolamine kinase B (447 aa).

The segment covering 178–208 has biased composition (low complexity); that stretch reads STTISTSTSTSTSTSSTSPSTSPSLENSTLS. Positions 178–217 are disordered; the sequence is STTISTSTSTSTSTSSTSPSTSPSLENSTLSPRNMNTQTS.

The protein belongs to the choline/ethanolamine kinase family.

The protein localises to the cytoplasm. It carries out the reaction ethanolamine + ATP = phosphoethanolamine + ADP + H(+). Its pathway is phospholipid metabolism; phosphatidylethanolamine biosynthesis; phosphatidylethanolamine from ethanolamine: step 1/3. Its function is as follows. Highly specific for ethanolamine phosphorylation. May be a rate-controlling step in phosphatidylethanolamine biosynthesis. This is Probable ethanolamine kinase B (etnkB) from Dictyostelium discoideum (Social amoeba).